We begin with the raw amino-acid sequence, 383 residues long: Lipid-A-disaccharide synthase (383 aa).

Belongs to the LpxB family.

It carries out the reaction a lipid X + a UDP-2-N,3-O-bis[(3R)-3-hydroxyacyl]-alpha-D-glucosamine = a lipid A disaccharide + UDP + H(+). It functions in the pathway bacterial outer membrane biogenesis; LPS lipid A biosynthesis. In terms of biological role, condensation of UDP-2,3-diacylglucosamine and 2,3-diacylglucosamine-1-phosphate to form lipid A disaccharide, a precursor of lipid A, a phosphorylated glycolipid that anchors the lipopolysaccharide to the outer membrane of the cell. The polypeptide is Lipid-A-disaccharide synthase (Aliivibrio fischeri (strain ATCC 700601 / ES114) (Vibrio fischeri)).